The sequence spans 681 residues: Transketolase 2 (681 aa).

Histidine 30 is a substrate binding site. Thiamine diphosphate contacts are provided by residues histidine 69 and 116-118 (GPL). Aspartate 157 lines the Mg(2+) pocket. Thiamine diphosphate is bound by residues glycine 158 and asparagine 187. Residues asparagine 187 and isoleucine 189 each contribute to the Mg(2+) site. Residues histidine 263, arginine 359, and serine 386 each coordinate substrate. Residue histidine 263 coordinates thiamine diphosphate. The thiamine diphosphate site is built by glutamate 418 and phenylalanine 445. The active-site Proton donor is glutamate 418. The substrate site is built by histidine 469, aspartate 477, and arginine 528.

It belongs to the transketolase family. Homodimer. It depends on Mg(2+) as a cofactor. Requires Ca(2+) as cofactor. Mn(2+) is required as a cofactor. The cofactor is Co(2+). Thiamine diphosphate serves as cofactor.

The enzyme catalyses D-sedoheptulose 7-phosphate + D-glyceraldehyde 3-phosphate = aldehydo-D-ribose 5-phosphate + D-xylulose 5-phosphate. Catalyzes the transfer of a two-carbon ketol group from a ketose donor to an aldose acceptor, via a covalent intermediate with the cofactor thiamine pyrophosphate. This chain is Transketolase 2 (TKL2), found in Saccharomyces cerevisiae (strain ATCC 204508 / S288c) (Baker's yeast).